The primary structure comprises 331 residues: Ornithine lipid hydroxylase OlsE (331 aa).

5 consecutive transmembrane segments (helical) span residues 13 to 33, 37 to 57, 85 to 105, 120 to 140, and 189 to 209; these read VSSL…YFAF, MHLL…ALFE, GGVQ…ATVA, WPMA…LYMA, and LLGA…FIGL. The Fatty acid hydroxylase domain maps to 126 to 260; that stretch reads VVLGLVIAEF…LVIWDQLLGT (135 aa).

It belongs to the sterol desaturase family.

It localises to the cell inner membrane. It participates in lipid metabolism. Functionally, involved in the biosynthesis of ornithine lipids (OLs), which are phosphorus-free membrane lipids. Is responsible for the hydroxylation of OL within the ornithine moiety. This Rhizobium tropici protein is Ornithine lipid hydroxylase OlsE.